A 186-amino-acid polypeptide reads, in one-letter code: dCTP deaminase (186 aa).

Lys-107–Arg-112 contacts dCTP. The Proton donor/acceptor role is filled by Glu-133. DCTP-binding residues include Gln-152, Tyr-166, and Gln-176.

The protein belongs to the dCTP deaminase family. Homotrimer.

It carries out the reaction dCTP + H2O + H(+) = dUTP + NH4(+). It functions in the pathway pyrimidine metabolism; dUMP biosynthesis; dUMP from dCTP (dUTP route): step 1/2. Its function is as follows. Catalyzes the deamination of dCTP to dUTP. The polypeptide is dCTP deaminase (Campylobacter fetus subsp. fetus (strain 82-40)).